The following is a 413-amino-acid chain: Multifunctional CCA protein (413 aa).

Residues G8 and R11 each coordinate ATP. Residues G8 and R11 each contribute to the CTP site. Residues D21 and D23 each contribute to the Mg(2+) site. ATP is bound by residues R91, R143, and R146. 3 residues coordinate CTP: R91, R143, and R146. The region spanning 232-333 (TGVHVMMVVD…VRFFERTDAL (102 aa)) is the HD domain.

It belongs to the tRNA nucleotidyltransferase/poly(A) polymerase family. Bacterial CCA-adding enzyme type 1 subfamily. In terms of assembly, monomer. Can also form homodimers and oligomers. Requires Mg(2+) as cofactor. The cofactor is Ni(2+).

The catalysed reaction is a tRNA precursor + 2 CTP + ATP = a tRNA with a 3' CCA end + 3 diphosphate. It carries out the reaction a tRNA with a 3' CCA end + 2 CTP + ATP = a tRNA with a 3' CCACCA end + 3 diphosphate. In terms of biological role, catalyzes the addition and repair of the essential 3'-terminal CCA sequence in tRNAs without using a nucleic acid template. Adds these three nucleotides in the order of C, C, and A to the tRNA nucleotide-73, using CTP and ATP as substrates and producing inorganic pyrophosphate. tRNA 3'-terminal CCA addition is required both for tRNA processing and repair. Also involved in tRNA surveillance by mediating tandem CCA addition to generate a CCACCA at the 3' terminus of unstable tRNAs. While stable tRNAs receive only 3'-terminal CCA, unstable tRNAs are marked with CCACCA and rapidly degraded. In Burkholderia multivorans (strain ATCC 17616 / 249), this protein is Multifunctional CCA protein.